Reading from the N-terminus, the 1176-residue chain is DNA-directed RNA polymerase subunit beta (1176 aa).

A compositionally biased stretch (polar residues) spans 13 to 30; it reads TDASLHQGRPQSSSNSSV. Positions 13–35 are disordered; sequence TDASLHQGRPQSSSNSSVPGAPN.

This sequence belongs to the RNA polymerase beta chain family. The RNAP catalytic core consists of 2 alpha, 1 beta, 1 beta' and 1 omega subunit. When a sigma factor is associated with the core the holoenzyme is formed, which can initiate transcription.

The catalysed reaction is RNA(n) + a ribonucleoside 5'-triphosphate = RNA(n+1) + diphosphate. In terms of biological role, DNA-dependent RNA polymerase catalyzes the transcription of DNA into RNA using the four ribonucleoside triphosphates as substrates. In Mycobacterium ulcerans (strain Agy99), this protein is DNA-directed RNA polymerase subunit beta.